We begin with the raw amino-acid sequence, 662 residues long: UvrABC system protein B (662 aa).

Positions 25-414 (TGLNSKKRSQ…GTVVELIIRP (390 aa)) constitute a Helicase ATP-binding domain. 38-45 (GITGSGKT) contacts ATP. The short motif at 91-114 (YYDYYQPESYIVRTDTFIEKDSSI) is the Beta-hairpin element. The region spanning 430-592 (QVEDLISEIQ…IIPKTINRAI (163 aa)) is the Helicase C-terminal domain. The region spanning 622 to 657 (KAHMDKLKKEMFKAASNLEFEQAAKLRNQLKALEEA) is the UVR domain.

The protein belongs to the UvrB family. In terms of assembly, forms a heterotetramer with UvrA during the search for lesions. Interacts with UvrC in an incision complex.

It localises to the cytoplasm. In terms of biological role, the UvrABC repair system catalyzes the recognition and processing of DNA lesions. A damage recognition complex composed of 2 UvrA and 2 UvrB subunits scans DNA for abnormalities. Upon binding of the UvrA(2)B(2) complex to a putative damaged site, the DNA wraps around one UvrB monomer. DNA wrap is dependent on ATP binding by UvrB and probably causes local melting of the DNA helix, facilitating insertion of UvrB beta-hairpin between the DNA strands. Then UvrB probes one DNA strand for the presence of a lesion. If a lesion is found the UvrA subunits dissociate and the UvrB-DNA preincision complex is formed. This complex is subsequently bound by UvrC and the second UvrB is released. If no lesion is found, the DNA wraps around the other UvrB subunit that will check the other stand for damage. The polypeptide is UvrABC system protein B (Rickettsia prowazekii (strain Madrid E)).